Consider the following 160-residue polypeptide: RNA pyrophosphohydrolase (160 aa).

Residues 10–154 (PYRPCVGVML…KRDVYVAVLD (145 aa)) form the Nudix hydrolase domain. The Nudix box signature appears at 44-65 (GGVEKGEDPRAAALRELWEETG).

Belongs to the Nudix hydrolase family. RppH subfamily. Requires a divalent metal cation as cofactor.

Functionally, accelerates the degradation of transcripts by removing pyrophosphate from the 5'-end of triphosphorylated RNA, leading to a more labile monophosphorylated state that can stimulate subsequent ribonuclease cleavage. The protein is RNA pyrophosphohydrolase of Roseobacter denitrificans (strain ATCC 33942 / OCh 114) (Erythrobacter sp. (strain OCh 114)).